The following is a 382-amino-acid chain: Na(+)/H(+) antiporter NhaA 1 (382 aa).

11 helical membrane-spanning segments follow: residues 10–30 (EFSI…NISP), 45–65 (FSFH…IAAA), 87–107 (LLAT…LNAL), 116–136 (GWGI…SLVF), 145–165 (FLLL…ALFY), 170–190 (LPAA…AALL), 211–231 (AGLF…VPFL), 252–272 (LASF…LFGL), 275–295 (AGVT…SLVI), 326–346 (LVGL…GEAF), and 353–373 (GAAK…LAAG).

This sequence belongs to the NhaA Na(+)/H(+) (TC 2.A.33) antiporter family.

It is found in the cell inner membrane. The catalysed reaction is Na(+)(in) + 2 H(+)(out) = Na(+)(out) + 2 H(+)(in). Its function is as follows. Na(+)/H(+) antiporter that extrudes sodium in exchange for external protons. The sequence is that of Na(+)/H(+) antiporter NhaA 1 from Pelobacter propionicus (strain DSM 2379 / NBRC 103807 / OttBd1).